Here is a 116-residue protein sequence, read N- to C-terminus: U3-theraphotoxin-Lsp1a (116 aa).

Positions 1–17 (MKLSTFIIMISLAVALA) are cleaved as a signal peptide. The propeptide occupies 18-50 (TWPSEHIEGSDSETKLNVELGPYALADRAEKGK).

The protein belongs to the neurotoxin 25 family. F7 subfamily. Post-translationally, contains 3 disulfide bonds. In terms of tissue distribution, expressed by the venom gland.

It localises to the secreted. The sequence is that of U3-theraphotoxin-Lsp1a from Lasiodora sp. (strain IBSP 8539) (Brazilian salmon pink birdeater).